The chain runs to 680 residues: Oligopeptidase A (680 aa).

His469 contributes to the Zn(2+) binding site. The active site involves Glu470. His473 and His476 together coordinate Zn(2+).

This sequence belongs to the peptidase M3 family. Zn(2+) serves as cofactor.

The enzyme catalyses Hydrolysis of oligopeptides, with broad specificity. Gly or Ala commonly occur as P1 or P1' residues, but more distant residues are also important, as is shown by the fact that Z-Gly-Pro-Gly-|-Gly-Pro-Ala is cleaved, but not Z-(Gly)(5).. In terms of biological role, may play a specific role in the degradation of signal peptides after they are released from precursor forms of secreted proteins. Can cleave N-acetyl-L-Ala(4). This Salmonella typhimurium (strain LT2 / SGSC1412 / ATCC 700720) protein is Oligopeptidase A (prlC).